We begin with the raw amino-acid sequence, 151 residues long: Epigen (151 aa).

A signal peptide spans 1–18; sequence MAFGMLIYILLKAMGALS. The Extracellular portion of the chain corresponds to 19–108; it reads EEAALTASSL…NSYAHNSYER (90 aa). Asparagine 39 carries N-linked (GlcNAc...) asparagine glycosylation. The 41-residue stretch at 54–94 folds into the EGF-like domain; it reads LMQTCLEEHHSYCINGLCAFHSELRKPICKCLAGYNGERCE. Disulfide bonds link cysteine 58/cysteine 71, cysteine 66/cysteine 82, and cysteine 84/cysteine 93. A helical membrane pass occupies residues 109 to 129; that stretch reads YIAVGIGIGILTSGILAIIYC. Residues 130 to 151 are Cytoplasmic-facing; that stretch reads YVRKRCRKLKSPYKVCMGETAL.

Its subcellular location is the membrane. Functionally, promotes the growth of epithelial cells. This is Epigen (EPGN) from Gallus gallus (Chicken).